A 456-amino-acid chain; its full sequence is 1,3-beta-glucanosyltransferase gas4 (456 aa).

The signal sequence occupies residues 1–25 (MGVANIIYALFLLGPSIFLKATAQT). Cysteines 68 and 97 form a disulfide. (1,3-beta-D-glucosyl)n-binding residues include tyrosine 86, asparagine 156, glutamate 157, aspartate 197, and arginine 202. The active-site Proton donor is glutamate 157. 2 disulfides stabilise this stretch: cysteine 211–cysteine 350 and cysteine 229–cysteine 260. A glycan (N-linked (GlcNAc...) asparagine) is linked at asparagine 248. Glutamate 257 acts as the Nucleophile in catalysis. Residue tyrosine 296 participates in (1,3-beta-D-glucosyl)n binding. 2 disordered regions span residues 334–353 (NPKGDGGYKKAGSPSKCPAN) and 384–434 (IEGP…ESGS). 2 N-linked (GlcNAc...) asparagine glycosylation sites follow: asparagine 353 and asparagine 415. A compositionally biased stretch (low complexity) spans 417–434 (TSTTSYTSGMTSSSESGS). Residue serine 432 is the site of GPI-anchor amidated serine attachment. Positions 433 to 456 (GSSKIGVAFCQALFITVLIATLSF) are cleaved as a propeptide — removed in mature form.

It belongs to the glycosyl hydrolase 72 family.

It localises to the cell membrane. In terms of biological role, splits internally a 1,3-beta-glucan molecule and transfers the newly generated reducing end (the donor) to the non-reducing end of another 1,3-beta-glucan molecule (the acceptor) forming a 1,3-beta linkage, resulting in the elongation of 1,3-beta-glucan chains in the cell wall. Involved in spore wall assembly. This chain is 1,3-beta-glucanosyltransferase gas4 (gas4), found in Schizosaccharomyces pombe (strain 972 / ATCC 24843) (Fission yeast).